We begin with the raw amino-acid sequence, 628 residues long: Siderophore iron transporter 1 (628 aa).

Transmembrane regions (helical) follow at residues 68–88, 107–127, 132–152, 164–184, 194–214, 225–245, 285–305, 317–337, 354–374, 394–414, 420–440, 448–468, 488–508, and 559–579; these read IYRV…GLDG, LLST…IFFA, IFGR…GTII, VGGC…EVIA, LLAL…SGNV, GIGM…ICML, IIGM…FTLA, IIVP…LWEI, GIFF…MQGD, ITSL…FILI, KPFI…LVHY, SGII…TYVT, LYLA…GAVW, and KILC…AFML.

The protein belongs to the major facilitator superfamily.

It is found in the endosome membrane. In terms of biological role, involved in the transport of siderophore ferrioxamine B and so has a role in iron homeostasis. The protein is Siderophore iron transporter 1 (SIT1) of Saccharomyces cerevisiae (strain ATCC 204508 / S288c) (Baker's yeast).